Consider the following 86-residue polypeptide: Chymotrypsin inhibitor (86 aa).

An N-terminal signal peptide occupies residues 1 to 22; that stretch reads MKLLFAIVALLALAFLCADISA.

It belongs to the protease inhibitor I13 (potato type I serine protease inhibitor) family. Monomer. Expressed in the body wall, coelomocytes and at a lower level in intestine.

The protein resides in the secreted. Its function is as follows. Inhibits L.terrestris digestive chymotrypsin LT_CH 1 and bovine alpha-chymotrypsin. This is Chymotrypsin inhibitor from Lumbricus terrestris (Common earthworm).